The sequence spans 176 residues: Probable Brix domain-containing ribosomal biogenesis protein (176 aa).

Positions 6–176 (IEIVFTSSRD…QLYDRNKNIN (171 aa)) constitute a Brix domain.

Functionally, probably involved in the biogenesis of the ribosome. The chain is Probable Brix domain-containing ribosomal biogenesis protein from Sulfurisphaera tokodaii (strain DSM 16993 / JCM 10545 / NBRC 100140 / 7) (Sulfolobus tokodaii).